Consider the following 391-residue polypeptide: Steroid 3-ketoacyl-CoA thiolase (391 aa).

Catalysis depends on C93, which acts as the Acyl-thioester intermediate. Residues Q151, 221–223 (RET), and S246 contribute to the CoA site. Residues H347 and C377 each act as proton acceptor in the active site. G379 lines the substrate pocket.

Belongs to the thiolase-like superfamily. Thiolase family. Dimer of dimers.

The catalysed reaction is an acyl-CoA + acetyl-CoA = a 3-oxoacyl-CoA + CoA. It catalyses the reaction 3-oxochol-4-en-22-oyl-CoA + acetyl-CoA = 3,22-dioxochol-4-en-24-oyl-CoA + CoA. It functions in the pathway steroid metabolism; cholesterol degradation. Functionally, involved in the beta-oxidation of the cholesterol side chain. It is important for utilization of cholesterol as a sole carbon source in vitro and for full virulence in the chronic stage of mouse lung infection. Catalyzes the thiolysis of 3,22-dioxochol-4-en-24-oyl-CoA to yield 3-oxo-4-pregnene-20-carboxyl-CoA (3-OPC-CoA) and acetyl-CoA. Also able to use acetoacetyl-CoA (AcAcCoA) as substrate. The sequence is that of Steroid 3-ketoacyl-CoA thiolase (fadA5) from Mycobacterium tuberculosis (strain ATCC 25618 / H37Rv).